A 483-amino-acid chain; its full sequence is ATP synthase subunit beta (483 aa).

Residue 168–175 (GGAGVGKT) coordinates ATP.

The protein belongs to the ATPase alpha/beta chains family. In terms of assembly, F-type ATPases have 2 components, CF(1) - the catalytic core - and CF(0) - the membrane proton channel. CF(1) has five subunits: alpha(3), beta(3), gamma(1), delta(1), epsilon(1). CF(0) has three main subunits: a(1), b(2) and c(9-12). The alpha and beta chains form an alternating ring which encloses part of the gamma chain. CF(1) is attached to CF(0) by a central stalk formed by the gamma and epsilon chains, while a peripheral stalk is formed by the delta and b chains.

The protein resides in the cell membrane. It catalyses the reaction ATP + H2O + 4 H(+)(in) = ADP + phosphate + 5 H(+)(out). Its function is as follows. Produces ATP from ADP in the presence of a proton gradient across the membrane. The catalytic sites are hosted primarily by the beta subunits. This is ATP synthase subunit beta from Mycobacterium ulcerans (strain Agy99).